Here is a 439-residue protein sequence, read N- to C-terminus: Trehalose-phosphatase (439 aa).

D163 and D165 together coordinate Mg(2+). The active-site Proton donor/acceptor is D165. Residue 282–284 (QRK) participates in substrate binding. Residue D373 coordinates Mg(2+).

This sequence belongs to the gob-1 trehalose phosphatase family. Requires Mg(2+) as cofactor. Ubiquitously expressed. Strong expression in intestine.

It catalyses the reaction alpha,alpha-trehalose 6-phosphate + H2O = alpha,alpha-trehalose + phosphate. In terms of biological role, catalyzes the hydrolysis of trehalose 6-phosphate to trehalose and phosphate; prevents the accumulation of toxic levels of trehalose 6-phosphate. This chain is Trehalose-phosphatase, found in Caenorhabditis elegans.